Here is a 945-residue protein sequence, read N- to C-terminus: Chaperone protein ClpD, chloroplastic (945 aa).

The transit peptide at 1–89 (MEVLSTSSPL…FERFTERAIR (89 aa)) directs the protein to the chloroplast. Repeat stretches follow at residues 90–146 (AIIF…WDEA) and 168–233 (FSIS…LKGE). The Clp R domain occupies 90–233 (AIIFSQKEAK…AAALTRLKGE (144 aa)). Residues 233–264 (EIAKDGREPSSSSKGSFESPPSGRIAGSGPGG) are disordered. Residues 241–255 (PSSSSKGSFESPPSG) are compositionally biased toward low complexity. Positions 271 to 523 (LEQFCVDLTA…RARIEAFRKK (253 aa)) are i. 316 to 323 (GEAGVGKT) is a binding site for ATP. A disordered region spans residues 555–586 (SRQKQDDGDAISDESGELVEESSLPPAAGDDE). Over residues 562–574 (GDAISDESGELVE) the composition is skewed to acidic residues. The II stretch occupies residues 590 to 781 (VGPDDIAAVA…LIIMTSNVGS (192 aa)). 664–671 (GPTGVGKT) provides a ligand contact to ATP.

Belongs to the ClpA/ClpB family. ClpD subfamily. As to quaternary structure, homodimer and homohexamer. Hexamerization upon addition of ATP. Interacts with CLPT1. Stably associated with the import machinery. Mg(2+) is required as a cofactor. In terms of tissue distribution, expressed in stems and leaves.

It is found in the plastid. Its subcellular location is the chloroplast stroma. It carries out the reaction ATP + H2O = ADP + phosphate + H(+). In terms of biological role, molecular chaperone that interact with a ClpP-like protease involved in degradation of denatured proteins in the chloroplast. The ATPase activity of CLPD is stimulated by CLPT1. Has no ADPase activity. Interacts with transit peptides with a positional preference. Localization of the signal sequence at the N-terminal end of a protein seems mandatory for interaction to take place. This Arabidopsis thaliana (Mouse-ear cress) protein is Chaperone protein ClpD, chloroplastic.